Reading from the N-terminus, the 120-residue chain is MKLIKVTLVFSLLALVFVAQTEAQNPIWENWLACNRIGTKALASLLRETIPTVRNLLNCIDFNPPTDIGNSYLSKLKLYYELVKRGALDKTQCLIVPLKESVRLLRPYVKSLETNKCLGE.

The signal sequence occupies residues 1–23; the sequence is MKLIKVTLVFSLLALVFVAQTEA.

In terms of tissue distribution, main cells of accessory gland and seminal fluid.

The protein resides in the secreted. Its function is as follows. Responsible for physiological and behavioral changes in mated female flies. The polypeptide is Accessory gland protein Acp53Ea (Acp53Ea) (Drosophila melanogaster (Fruit fly)).